We begin with the raw amino-acid sequence, 176 residues long: Cytochrome b (176 aa).

Helical transmembrane passes span 33 to 53 (FGSL…FLAM), 77 to 98 (WLLR…YLHI), and 113 to 133 (WNVG…GYVL). His-83 and His-97 together coordinate heme b.

Belongs to the cytochrome b family. The cytochrome bc1 complex contains 11 subunits: 3 respiratory subunits (MT-CYB, CYC1 and UQCRFS1), 2 core proteins (UQCRC1 and UQCRC2) and 6 low-molecular weight proteins (UQCRH/QCR6, UQCRB/QCR7, UQCRQ/QCR8, UQCR10/QCR9, UQCR11/QCR10 and a cleavage product of UQCRFS1). This cytochrome bc1 complex then forms a dimer. It depends on heme b as a cofactor.

The protein resides in the mitochondrion inner membrane. Component of the ubiquinol-cytochrome c reductase complex (complex III or cytochrome b-c1 complex) that is part of the mitochondrial respiratory chain. The b-c1 complex mediates electron transfer from ubiquinol to cytochrome c. Contributes to the generation of a proton gradient across the mitochondrial membrane that is then used for ATP synthesis. The chain is Cytochrome b (MT-CYB) from Promops centralis (Big crested mastiff bat).